The chain runs to 190 residues: Putative cyclic ADP-D-ribose synthase ThsB (190 aa).

Belongs to the Thoeris B TIR-like family. As to quaternary structure, homodimer.

The protein localises to the cytoplasm. Its activity is regulated as follows. Activated upon phage infection. In terms of biological role, TIR-like domain-containing component of the Thoeris antiviral defense system, composed of ThsA and ThsB. Expression of ThsA and ThsB in B.subtilis (strain BEST7003) confers resistance to phages SBSphiC, SBSphiJ and SPO1. Phage infection activates this protein, generating a signal molecule that in turn activates ThsA. Functionally, probably hydrolyzes NAD(+) to make a cyclic ADP-D-ribose (cADPR) signaling molecule; might make 3'cADPR. The chain is Putative cyclic ADP-D-ribose synthase ThsB from Bacillus amyloliquefaciens (strain Y2) (Bacillus amyloliquefaciens subsp. plantarum (strain B9601-Y2)).